Here is a 508-residue protein sequence, read N- to C-terminus: MRSIRLFHTSSTWLSKFKLDPNYKFKCGIEIHTQLKTKYKLFSLSPTSFYSTPNSKVSYFDCGLPGTQPKLNPEALYLALKLAVALDCEIQQNSSFDRKHYFYPDQPLGYQITQHYHPIAKNGFLELNSKFDEIKNSSKKINIEQIQIEQDTGKTTYDKFDKSVKVDYNRSNMPLIELVTKPDFEDLQQVRAFVKKYQTMVRHLDICTGDLETGAIRIDVNVSVNGNPRVEIKNLGSNSDIQDALKYEYTRQVDSIKNNEKIIQETRGWTGTKTVSLRLKEDAVDYRYVPDSELPFINLSPTIASDIKESLPELPEQILQKLTSKPYDLELKYARFLTENRDTLNYYFQLFKSVADRHHSGKLANNWFIHEFLGAFTKINVKVDLDILPANFLADLVLQVAEKNISTTSARLLLLQIIQTPEDKGKPIQDLIVQYDLGSPVDMSTEDLNDAVSDICSEIISNNADVVERIKKGQKNSIKFLIGLAMKETQGKVNAKTFSEKFNELLDL.

The protein belongs to the GatB/GatE family. GatB subfamily. As to quaternary structure, subunit of the heterotrimeric GatFAB amidotransferase (AdT) complex, composed of A, B and F subunits.

It is found in the mitochondrion. It carries out the reaction L-glutamyl-tRNA(Gln) + L-glutamine + ATP + H2O = L-glutaminyl-tRNA(Gln) + L-glutamate + ADP + phosphate + H(+). Its function is as follows. Allows the formation of correctly charged Gln-tRNA(Gln) through the transamidation of misacylated Glu-tRNA(Gln) in the mitochondria. The reaction takes place in the presence of glutamine and ATP through an activated gamma-phospho-Glu-tRNA(Gln). The polypeptide is Glutamyl-tRNA(Gln) amidotransferase subunit B, mitochondrial (Scheffersomyces stipitis (strain ATCC 58785 / CBS 6054 / NBRC 10063 / NRRL Y-11545) (Yeast)).